Reading from the N-terminus, the 402-residue chain is Multidrug resistance protein MdtH (402 aa).

Residues 1–12 (MSRVSQARNLGK) lie on the Cytoplasmic side of the membrane. The helical transmembrane segment at 13 to 33 (YFLLIDNMLVVLGFFVVFPLI) threads the bilayer. Residues 34-98 (SIRFVDQMGW…GFATMGIAHE (65 aa)) lie on the Periplasmic side of the membrane. The chain crosses the membrane as a helical span at residues 99–116 (PWLLWFSCLLSGLGGTLF). At 117–138 (DPPRSALVVKLIRPQQRGRFFS) the chain is on the cytoplasmic side. Residues 139-159 (LLMMQDSAGAVIGALLGSWLL) form a helical membrane-spanning segment. Residues 160–164 (QYDFR) are Periplasmic-facing. A helical membrane pass occupies residues 165 to 185 (LVCATGAVLFVLCAAFNAWLL). Topologically, residues 186–213 (PAWKLSTVRTPVREGMTRVMRDKRFVTY) are cytoplasmic. Residues 214–234 (VLTLAGYYMLAVQVMLMLPIM) form a helical membrane-spanning segment. Residues 235 to 243 (VNDVAGAPS) lie on the Periplasmic side of the membrane. Residues 244 to 264 (AVKWMYAIEACLSLTLLYPIA) form a helical membrane-spanning segment. The Cytoplasmic portion of the chain corresponds to 265–276 (RWSEKHFRLEHR). The helical transmembrane segment at 277–297 (LMAGLLIMSLSMMPVGMVSGL) threads the bilayer. Residues 298-299 (QQ) are Periplasmic-facing. The chain crosses the membrane as a helical span at residues 300 to 320 (LFTLICLFYIGSIIAEPARET). Over 321 to 339 (LSASLADARARGSYMGCSR) the chain is Cytoplasmic. Residues 340 to 360 (LGLAIGGAIGYIGGGWLFDLG) traverse the membrane as a helical segment. At 361-367 (KSAHQPE) the chain is on the periplasmic side. Residues 368-388 (LPWMMLGIIGIFTFLALGWQF) traverse the membrane as a helical segment. Over 389–402 (SQKRAARRLLERDA) the chain is Cytoplasmic.

The protein belongs to the major facilitator superfamily. DHA1 family. MdtH (TC 2.A.1.2.21) subfamily.

Its subcellular location is the cell inner membrane. Confers resistance to norfloxacin and enoxacin. This is Multidrug resistance protein MdtH from Escherichia coli (strain SE11).